The chain runs to 414 residues: Dual-specificity RNA methyltransferase RlmN (414 aa).

The span at 1-13 (MTSAVGISVPNTD) shows a compositional bias: polar residues. Positions 1–22 (MTSAVGISVPNTDAQSSQSASQ) are disordered. The active-site Proton acceptor is E124. In terms of domain architecture, Radical SAM core spans 134-377 (TGSRKTLCIS…CTIRQTRGDD (244 aa)). C141 and C382 form a disulfide bridge. [4Fe-4S] cluster-binding residues include C148, C152, and C155. S-adenosyl-L-methionine contacts are provided by residues 204–205 (GE), S236, 258–260 (SLH), and N339. The S-methylcysteine intermediate role is filled by C382.

Belongs to the radical SAM superfamily. RlmN family. [4Fe-4S] cluster serves as cofactor.

Its subcellular location is the cytoplasm. It catalyses the reaction adenosine(2503) in 23S rRNA + 2 reduced [2Fe-2S]-[ferredoxin] + 2 S-adenosyl-L-methionine = 2-methyladenosine(2503) in 23S rRNA + 5'-deoxyadenosine + L-methionine + 2 oxidized [2Fe-2S]-[ferredoxin] + S-adenosyl-L-homocysteine. The enzyme catalyses adenosine(37) in tRNA + 2 reduced [2Fe-2S]-[ferredoxin] + 2 S-adenosyl-L-methionine = 2-methyladenosine(37) in tRNA + 5'-deoxyadenosine + L-methionine + 2 oxidized [2Fe-2S]-[ferredoxin] + S-adenosyl-L-homocysteine. Its function is as follows. Specifically methylates position 2 of adenine 2503 in 23S rRNA and position 2 of adenine 37 in tRNAs. m2A2503 modification seems to play a crucial role in the proofreading step occurring at the peptidyl transferase center and thus would serve to optimize ribosomal fidelity. The protein is Dual-specificity RNA methyltransferase RlmN of Acinetobacter baylyi (strain ATCC 33305 / BD413 / ADP1).